We begin with the raw amino-acid sequence, 645 residues long: Chaperone protein DnaK (645 aa).

T201 carries the phosphothreonine; by autocatalysis modification. Low complexity predominate over residues N606–S629. Residues N606–K645 form a disordered region. The span at K630 to K645 shows a compositional bias: basic and acidic residues.

It belongs to the heat shock protein 70 family.

Its function is as follows. Acts as a chaperone. This chain is Chaperone protein DnaK, found in Ehrlichia ruminantium (strain Gardel).